Reading from the N-terminus, the 97-residue chain is Putative regulatory protein Dole_1911 (97 aa).

Belongs to the RemA family.

This is Putative regulatory protein Dole_1911 from Desulfosudis oleivorans (strain DSM 6200 / JCM 39069 / Hxd3) (Desulfococcus oleovorans).